The following is a 702-amino-acid chain: Ribosomal RNA large subunit methyltransferase K/L (702 aa).

In terms of domain architecture, THUMP spans 43-154 (LVYQSLMWSR…KETASIALDL (112 aa)).

This sequence belongs to the methyltransferase superfamily. RlmKL family.

The protein resides in the cytoplasm. The catalysed reaction is guanosine(2445) in 23S rRNA + S-adenosyl-L-methionine = N(2)-methylguanosine(2445) in 23S rRNA + S-adenosyl-L-homocysteine + H(+). It catalyses the reaction guanosine(2069) in 23S rRNA + S-adenosyl-L-methionine = N(2)-methylguanosine(2069) in 23S rRNA + S-adenosyl-L-homocysteine + H(+). Its function is as follows. Specifically methylates the guanine in position 2445 (m2G2445) and the guanine in position 2069 (m7G2069) of 23S rRNA. This chain is Ribosomal RNA large subunit methyltransferase K/L, found in Shigella boydii serotype 4 (strain Sb227).